Consider the following 434-residue polypeptide: DNA primase large subunit PriL (434 aa).

[4Fe-4S] cluster-binding residues include cysteine 281, cysteine 392, cysteine 403, and cysteine 409.

It belongs to the eukaryotic-type primase large subunit family. In terms of assembly, heterodimer of a small subunit (PriS) and a large subunit (PriL). [4Fe-4S] cluster is required as a cofactor.

Functionally, regulatory subunit of DNA primase, an RNA polymerase that catalyzes the synthesis of short RNA molecules used as primers for DNA polymerase during DNA replication. Stabilizes and modulates the activity of the small subunit, increasing the rate of DNA synthesis, and conferring RNA synthesis capability. The DNA polymerase activity may enable DNA primase to also catalyze primer extension after primer synthesis. May also play a role in DNA repair. The protein is DNA primase large subunit PriL of Methanothermobacter thermautotrophicus (strain ATCC 29096 / DSM 1053 / JCM 10044 / NBRC 100330 / Delta H) (Methanobacterium thermoautotrophicum).